Here is a 131-residue protein sequence, read N- to C-terminus: Glycine cleavage system H protein (131 aa).

Residues 24–106 form the Lipoyl-binding domain; it reads TLRVGITDYA…YGEGWLVDLQ (83 aa). An N6-lipoyllysine modification is found at Lys65.

Belongs to the GcvH family. As to quaternary structure, the glycine cleavage system is composed of four proteins: P, T, L and H. (R)-lipoate serves as cofactor.

In terms of biological role, the glycine cleavage system catalyzes the degradation of glycine. The H protein shuttles the methylamine group of glycine from the P protein to the T protein. The protein is Glycine cleavage system H protein of Mycobacterium sp. (strain JLS).